Consider the following 178-residue polypeptide: MSIEVSNESGYDVSEPELISVARFVIEKMDVHPAAELSMVLLDSAAMADLHMRWMDLPGPTDVMSFPMDELEPGGRPDAPEPGPAMLGDIVLCPEFAEQQAAKAGHSLGHELALLTVHGVLHLLGYDHAEPDEEKEMFALQRQLLEEWVADQVEAYHADRQSEKDRRLLDKSRYFDEP.

The Zn(2+) site is built by H118, H122, and H128. Residues A158–P178 are disordered.

It belongs to the endoribonuclease YbeY family. The cofactor is Zn(2+).

It localises to the cytoplasm. In terms of biological role, single strand-specific metallo-endoribonuclease involved in late-stage 70S ribosome quality control and in maturation of the 3' terminus of the 16S rRNA. The sequence is that of Endoribonuclease YbeY from Mycolicibacterium smegmatis (strain ATCC 700084 / mc(2)155) (Mycobacterium smegmatis).